We begin with the raw amino-acid sequence, 332 residues long: Adenosine receptor A2b (332 aa).

The Extracellular segment spans residues 1-8 (MQLETQDA). Residues 9-33 (LYVALELAIAALSVAGNVLVCAAVG) form a helical membrane-spanning segment. Residues 34–43 (TSSALQTPTN) are Cytoplasmic-facing. The chain crosses the membrane as a helical span at residues 44-67 (YFLVSLAAADVAVGLFAIPFAITI). Topologically, residues 68-78 (SLGFCTDFHSC) are extracellular. Residues Cys-78 and Cys-170 are joined by a disulfide bond. Residues 79 to 101 (LFLACFVLVLTQSSIFSLLAVAV) traverse the membrane as a helical segment. Residues 102-121 (DRYLAIRVPLRYKSLVTGTR) are Cytoplasmic-facing. Residues 122-144 (ARGVIAVLWVLAFGIGLTPFLGW) form a helical membrane-spanning segment. The Extracellular segment spans residues 145 to 177 (NSKDSATNCTEPWDGTTNESCCLVKCLFENVVP). N-linked (GlcNAc...) asparagine glycans are attached at residues Asn-152 and Asn-162. Glu-173 serves as a coordination point for adenosine. The chain crosses the membrane as a helical span at residues 178–202 (MSYMVYFNFFGCVLPPLLIMLVIYI). At 203 to 234 (KIFMVACKQLQRTELVDHSRTVIQREIHAAKS) the chain is on the cytoplasmic side. Residues 235–258 (LAMIVGIFALCWLPVHAINCVTLF) traverse the membrane as a helical segment. Asn-253 contributes to the adenosine binding site. Residues 259-266 (QPARAKDK) lie on the Extracellular side of the membrane. A helical membrane pass occupies residues 267–290 (PKWAMNMAILLSHASSVVNPIVYA). 2 residues coordinate adenosine: Ser-278 and His-279. Over 291–332 (YRNRDFRYTFHKIISRYVLCQTDVLKSGNGQAGTQSALDVGL) the chain is Cytoplasmic. Cys-310 carries S-palmitoyl cysteine lipidation.

This sequence belongs to the G-protein coupled receptor 1 family.

It localises to the cell membrane. Functionally, receptor for adenosine. The activity of this receptor is mediated by G proteins which activate adenylyl cyclase. The chain is Adenosine receptor A2b (ADORA2B) from Canis lupus familiaris (Dog).